Consider the following 175-residue polypeptide: Avenin-like a3 (175 aa).

The first 19 residues, 1 to 19 (MKTMFLLALLAFTATSAVA), serve as a signal peptide directing secretion.

This sequence belongs to the prolamin family. In terms of processing, contains 7 disulfide bonds.

Functionally, seed storage protein. Not integrated in the gluten polymer through disulfide bonds, unless incorporated by reduction and reoxidation during dough making. Increases dough strength and bread volume, but decreases dough stability when added into a base wheat flour. The sequence is that of Avenin-like a3 from Triticum aestivum (Wheat).